The sequence spans 185 residues: Ribosome-recycling factor (185 aa).

This sequence belongs to the RRF family.

It localises to the cytoplasm. Responsible for the release of ribosomes from messenger RNA at the termination of protein biosynthesis. May increase the efficiency of translation by recycling ribosomes from one round of translation to another. This Shewanella oneidensis (strain ATCC 700550 / JCM 31522 / CIP 106686 / LMG 19005 / NCIMB 14063 / MR-1) protein is Ribosome-recycling factor.